The primary structure comprises 508 residues: METLLLDGETLTLEQVRAVATGAARAALAPAARERVRRSRALVDARLEDGEAHYGINTGFGTLAEVRIPRADLERLQRNLVLSHAAGVGAPLPLAEARALVLLRANVLAKGVSGIRERTLELLLAMLERGVVPVVPERGSVGASGDLAPLAHLALVLIGDGEAFLAPPGAAAPPERLPGGEALRRAGLEPVVLQPKEGLALVNGTQAMAAVGTLALLRAERLAALADLAGAMTLEGLLGSHRPFAPEIQAARGQPGQIEAAAHLRALLAGSELNASHQGPGCHKVQDPYSLRCMPQVHGAARDGIGFCRGVLAREVNAATDNPLVFPDTGEIVSGGNFHGQPVALALDVLAVAASHLAAISERRVEQLVNPSLSGLPPFLAPQHGLNSGFMIAQVTSAALVSENKVLCHPASVDSIPSSAGREDHVSMGMTAALKARQVVENVRTCLAIELLVAAQALDLRAPLRPAQRVADAHARLRERVPHLSEDRALYRDIEAVSRLVDEGALEL.

The 5-imidazolinone (Ala-Gly) cross-link spans alanine 143–glycine 145. The residue at position 144 (serine 144) is a 2,3-didehydroalanine (Ser).

Belongs to the PAL/histidase family. In terms of processing, contains an active site 4-methylidene-imidazol-5-one (MIO), which is formed autocatalytically by cyclization and dehydration of residues Ala-Ser-Gly.

Its subcellular location is the cytoplasm. It catalyses the reaction L-histidine = trans-urocanate + NH4(+). It functions in the pathway amino-acid degradation; L-histidine degradation into L-glutamate; N-formimidoyl-L-glutamate from L-histidine: step 1/3. The polypeptide is Histidine ammonia-lyase (Anaeromyxobacter dehalogenans (strain 2CP-C)).